Here is a 227-residue protein sequence, read N- to C-terminus: MTARPLSELVEQGWAAALEPVVDQVAEMGRFLRAEIAAGRRYLPAGHSVLRAFTYPFDNVRVLIVGQDPYPTPGHAVGLSFSVAPDVRPLPRSLANVFDEYTADLGYPLPVCGDLTPWAQRGVLLLNRVLTVRPSNPASHRGKGWEVITECAIRALAARSEPMVAILWGRDAATLKPLLTVDNCVVIESPHPSPLSASRGFFGSRPFSRTNEILVGMGAGPINWRLP.

Asp68 functions as the Proton acceptor in the catalytic mechanism.

This sequence belongs to the uracil-DNA glycosylase (UDG) superfamily. UNG family.

It localises to the cytoplasm. It carries out the reaction Hydrolyzes single-stranded DNA or mismatched double-stranded DNA and polynucleotides, releasing free uracil.. Functionally, excises uracil residues from the DNA which can arise as a result of misincorporation of dUMP residues by DNA polymerase or due to deamination of cytosine. The chain is Uracil-DNA glycosylase from Mycobacterium leprae (strain Br4923).